The primary structure comprises 110 residues: Chagasin (110 aa).

The short motif at 29-34 (NPTTGF) is the BC loop element. The short motif at 59-68 (PPDSKLLGAG) is the DE loop element. Positions 91 to 100 (RPWTGPSHDS) match the FG loop motif.

It belongs to the protease inhibitor I42 family. As to quaternary structure, interacts with cruzipain.

It localises to the flagellar pocket. The protein localises to the cytoplasmic vesicle. Its subcellular location is the cell surface. In terms of biological role, cysteine protease inhibitor. Inhibits cysteine protease cruzipain. This chain is Chagasin (cha), found in Trypanosoma cruzi.